The primary structure comprises 276 residues: 2,3,4,5-tetrahydropyridine-2,6-dicarboxylate N-succinyltransferase (276 aa).

Residues Arg107 and Asp144 each contribute to the substrate site.

The protein belongs to the transferase hexapeptide repeat family. Homotrimer.

Its subcellular location is the cytoplasm. It catalyses the reaction (S)-2,3,4,5-tetrahydrodipicolinate + succinyl-CoA + H2O = (S)-2-succinylamino-6-oxoheptanedioate + CoA. It functions in the pathway amino-acid biosynthesis; L-lysine biosynthesis via DAP pathway; LL-2,6-diaminopimelate from (S)-tetrahydrodipicolinate (succinylase route): step 1/3. This is 2,3,4,5-tetrahydropyridine-2,6-dicarboxylate N-succinyltransferase from Gluconobacter oxydans (strain 621H) (Gluconobacter suboxydans).